Here is a 175-residue protein sequence, read N- to C-terminus: NADH-ubiquinone oxidoreductase chain 6 (175 aa).

A run of 5 helical transmembrane segments spans residues 1–21 (MMTY…VGFS), 25–45 (SPIY…GIIM), 47–67 (FGGS…MLVV), 88–108 (TVMG…LYVL), and 149–169 (YGAW…LVIL).

The protein belongs to the complex I subunit 6 family. Core subunit of respiratory chain NADH dehydrogenase (Complex I) which is composed of 45 different subunits.

The protein localises to the mitochondrion inner membrane. It catalyses the reaction a ubiquinone + NADH + 5 H(+)(in) = a ubiquinol + NAD(+) + 4 H(+)(out). Core subunit of the mitochondrial membrane respiratory chain NADH dehydrogenase (Complex I) which catalyzes electron transfer from NADH through the respiratory chain, using ubiquinone as an electron acceptor. Essential for the catalytic activity and assembly of complex I. In Equus caballus (Horse), this protein is NADH-ubiquinone oxidoreductase chain 6 (MT-ND6).